Consider the following 472-residue polypeptide: Glutamate--tRNA ligase (472 aa).

The 'HIGH' region motif lies at P10–G20. 4 residues coordinate Zn(2+): C99, C101, C126, and D128. The short motif at K238 to R242 is the 'KMSKS' region element. Residue K241 coordinates ATP.

This sequence belongs to the class-I aminoacyl-tRNA synthetase family. Glutamate--tRNA ligase type 1 subfamily. In terms of assembly, monomer. The cofactor is Zn(2+).

The protein resides in the cytoplasm. The catalysed reaction is tRNA(Glu) + L-glutamate + ATP = L-glutamyl-tRNA(Glu) + AMP + diphosphate. Catalyzes the attachment of glutamate to tRNA(Glu) in a two-step reaction: glutamate is first activated by ATP to form Glu-AMP and then transferred to the acceptor end of tRNA(Glu). The chain is Glutamate--tRNA ligase from Photorhabdus laumondii subsp. laumondii (strain DSM 15139 / CIP 105565 / TT01) (Photorhabdus luminescens subsp. laumondii).